Here is a 214-residue protein sequence, read N- to C-terminus: High frequency lysogenization protein HflD homolog (214 aa).

The protein belongs to the HflD family.

It is found in the cytoplasm. Its subcellular location is the cell inner membrane. This is High frequency lysogenization protein HflD homolog from Chromohalobacter salexigens (strain ATCC BAA-138 / DSM 3043 / CIP 106854 / NCIMB 13768 / 1H11).